Consider the following 198-residue polypeptide: Recombination protein RecR (198 aa).

The C4-type zinc-finger motif lies at 57–72 (CSTCQTLTDQDPCAIC). Positions 80–175 (RMICVVEGVP…KVTRIAQGVP (96 aa)) constitute a Toprim domain.

It belongs to the RecR family.

In terms of biological role, may play a role in DNA repair. It seems to be involved in an RecBC-independent recombinational process of DNA repair. It may act with RecF and RecO. The polypeptide is Recombination protein RecR (Anaeromyxobacter dehalogenans (strain 2CP-C)).